The primary structure comprises 60 residues: Large ribosomal subunit protein bL32 (60 aa).

Positions 1-27 (MAVPRNRLSNARKNSKRAHHAKKPKSL) are disordered. Residues 13–25 (KNSKRAHHAKKPK) are compositionally biased toward basic residues.

This sequence belongs to the bacterial ribosomal protein bL32 family.

The sequence is that of Large ribosomal subunit protein bL32 from Protochlamydia amoebophila (strain UWE25).